A 242-amino-acid polypeptide reads, in one-letter code: Glucosamine-6-phosphate deaminase (242 aa).

D67 (proton acceptor; for enolization step) is an active-site residue. Catalysis depends on N137, which acts as the For ring-opening step. The Proton acceptor; for ring-opening step role is filled by H139. E144 serves as the catalytic For ring-opening step.

This sequence belongs to the glucosamine/galactosamine-6-phosphate isomerase family. NagB subfamily.

The catalysed reaction is alpha-D-glucosamine 6-phosphate + H2O = beta-D-fructose 6-phosphate + NH4(+). Its pathway is amino-sugar metabolism; N-acetylneuraminate degradation; D-fructose 6-phosphate from N-acetylneuraminate: step 5/5. In terms of biological role, catalyzes the reversible isomerization-deamination of glucosamine 6-phosphate (GlcN6P) to form fructose 6-phosphate (Fru6P) and ammonium ion. In Staphylococcus haemolyticus (strain JCSC1435), this protein is Glucosamine-6-phosphate deaminase.